Here is a 118-residue protein sequence, read N- to C-terminus: Na(+)/H(+) antiporter subunit G1 (118 aa).

Transmembrane regions (helical) follow at residues 9–29, 47–67, and 69–89; these read LAVIFVILGAIISAVTAIGII, LGAIFLLFGTFLYFIATDGYI, and MQLIFGILFILITGPLSSHLI.

It belongs to the CPA3 antiporters (TC 2.A.63) subunit G family. May form a heterooligomeric complex that consists of seven subunits: mnhA1, mnhB1, mnhC1, mnhD1, mnhE1, mnhF1 and mnhG1.

Its subcellular location is the cell membrane. Mnh complex is a Na(+)/H(+) antiporter involved in Na(+) excretion. In Staphylococcus haemolyticus (strain JCSC1435), this protein is Na(+)/H(+) antiporter subunit G1 (mnhG1).